Here is a 110-residue protein sequence, read N- to C-terminus: Insulin-2 (110 aa).

A signal peptide spans 1–24 (MALWIRFLPLLALLILWEPRPAQA). 3 cysteine pairs are disulfide-bonded: Cys31–Cys96, Cys43–Cys109, and Cys95–Cys100. A propeptide spans 57-87 (EVEDPQVAQLELGGGPGAGDLQTLALEVARQ) (c peptide).

The protein belongs to the insulin family. As to quaternary structure, heterodimer of a B chain and an A chain linked by two disulfide bonds.

Its subcellular location is the secreted. Its function is as follows. Insulin decreases blood glucose concentration. It increases cell permeability to monosaccharides, amino acids and fatty acids. It accelerates glycolysis, the pentose phosphate cycle, and glycogen synthesis in liver. This is Insulin-2 (Ins2) from Rattus norvegicus (Rat).